Reading from the N-terminus, the 648-residue chain is RAF proto-oncogene serine/threonine-protein kinase (648 aa).

S29 carries the post-translational modification Phosphoserine; by MAPK1. At S43 the chain carries Phosphoserine. The region spanning 56–131 (NTIRVFLPNK…IGEELQVDFL (76 aa)) is the RBD domain. Residues 138 to 184 (THNFARKTFLKLAFCDICQKFLLNGFRCQTCGYKFHEHCSTKVPTMC) form a Phorbol-ester/DAG-type zinc finger. Zn(2+) contacts are provided by H139, C152, C155, C165, C168, H173, C176, and C184. The segment at 217–335 (MRESVSRMPA…EKNKIRPRGQ (119 aa)) is disordered. Residue S233 is modified to Phosphoserine; by PKA. Residues 239–271 (TFNTSSPSSEGSLSQRQRSTSTPNVHMVSTTLP) are compositionally biased toward polar residues. Phosphoserine occurs at positions 252 and 259. T268 bears the Phosphothreonine; by autocatalysis mark. A Phosphothreonine; by PKA modification is found at T269. Over residues 275–285 (RMIEDAIRSHS) the composition is skewed to basic and acidic residues. Positions 286–301 (ESASPSALSSSPNNLS) are enriched in low complexity. Phosphoserine; by MAPK1 occurs at positions 289, 296, and 301. Positions 331–349 (RPRGQRDSSYYWEIEASEV) are interaction with PEBP1/RKIP. Phosphoserine; by PAK1, PAK2, PAK3 and PAK5 is present on S338. The residue at position 339 (S339) is a Phosphoserine; by PAK1, PAK2 and PAK3. Y340 and Y341 each carry phosphotyrosine; by SRC. The 261-residue stretch at 349 to 609 (VMLSTRIGSG…PQILSSIELL (261 aa)) folds into the Protein kinase domain. ATP contacts are provided by residues 355–363 (IGSGSFGTV) and K375. Catalysis depends on D468, which acts as the Proton acceptor. S471 bears the Phosphoserine mark. T491 carries the phosphothreonine modification. Residue S494 is modified to Phosphoserine. Phosphoserine; by PKC is present on residues S497 and S499. The residue at position 563 (R563) is a Symmetric dimethylarginine; by PRMT5. Residue S621 is modified to Phosphoserine. S642 is subject to Phosphoserine; by MAPK1.

It belongs to the protein kinase superfamily. TKL Ser/Thr protein kinase family. RAF subfamily. As to quaternary structure, monomer. Homodimer. Heterodimerizes with BRAF and this heterodimer possesses a highly increased kinase activity compared to the respective homodimers or monomers. Heterodimerization is mitogen-regulated and enhanced by 14-3-3 proteins. MAPK1/ERK2 activation can induce a negative feedback that promotes the dissociation of the heterodimer. Forms a multiprotein complex with Ras (M-Ras/MRAS), SHOC2 and protein phosphatase 1 (PPP1CA, PPP1CB and PPP1CC). Interacts with LZTR1. Interacts with Ras proteins; the interaction is antagonized by RIN1. Weakly interacts with RIT1. Interacts with STK3/MST2; the interaction inhibits its pro-apoptotic activity. Interacts (when phosphorylated at Ser-259) with YWHAZ (unphosphorylated at 'Thr-232'). Interacts with MAP3K5/ASF1 (via N-terminus) and this interaction inhibits the proapoptotic function of MAP3K5/ASK1. Interacts with PAK1 (via kinase domain). The phosphorylated form interacts with PIN1. The Ser-338 and Ser-339 phosphorylated form (by PAK1) interacts with BCL2. Interacts with PEBP1/RKIP and this interaction is enhanced if RAF1 is phosphorylated on residues Ser-338, Ser-339, Tyr-340 and Tyr-341. Interacts with ADCY2, ADCY5, ADCY6, DGKH, RCAN1/DSCR1, PPP1R12A, PKB/AKT1, PPP2CA, PPP2R1B, SPRY2, SPRY4, CNKSR1/CNK1, KSR2 and PHB/prohibitin. Interacts with ROCK2. Interacts (via N-terminus) with RGS14 (via RBD domains); the interaction mediates the formation of a ternary complex with BRAF, a ternary complex inhibited by GNAI1. Probably forms a complex composed of chaperones HSP90 and HSP70, co-chaperones CDC37, PPP5C, TSC1 and client protein TSC2, CDK4, AKT, RAF1 and NR3C1; this complex does not contain co-chaperones STIP1/HOP and PTGES3/p23. Interacts with MAP2K1/MEK1 and MAP2K2/MEK2. In its active form, interacts with PRMT5. Interacts with FAM83B; displaces 14-3-3 proteins from RAF1 and activates RAF1. Interacts with PDE8A; the interaction promotes RAF1 activity. Interacts with MFHAS1. Interacts with GLS. Interacts with YWHAZ. Interacts with NEK10 and MAP2K1; the interaction is direct with NEK10 and required for ERK1/2-signaling pathway activation in response to UV irradiation. Zn(2+) serves as cofactor. Post-translationally, phosphorylation at Thr-269, Ser-338, Tyr-341, Thr-491 and Ser-494 results in its activation. Phosphorylation at Ser-29, Ser-43, Ser-289, Ser-296, Ser-301 and Ser-642 by MAPK1/ERK2 results in its inactivation. Phosphorylation at Ser-259 induces the interaction with YWHAZ and inactivates kinase activity. Dephosphorylation of Ser-259 by the SHOC2-MRAS-PP1c (SMP) complex consisting of SHOC2, GTP-bound M-Ras/MRAS and the catalytic subunit of protein phosphatase 1 (PPP1CA, PPP1CB or PPP1CC); this relieves inactivation and stimulates kinase activity. Phosphorylation at Ser-338 by PAK1 and PAK5 and Ser-339 by PAK1 is required for its mitochondrial localization. Phosphorylation at Ser-621 in response to growth factor treatment stabilizes the protein, possibly by preventing proteasomal degradation. Phosphorylation at Ser-289, Ser-296, Ser-301, Ser-338 and Ser-621 are somehow linked to the methylation potential of cells. Treatment of cells with HGF in the presence of the methylation inhibitor 5'-methylthioadenosine (MTA) results in increased phosphorylation at Ser-338 and Ser-621 and decreased phosphorylation at Ser-296, Ser-301 and Ser-338. Dephosphorylation at Ser-338 by PPP5C results in a decreased of activity. In terms of processing, methylated in response to EGF treatment. This modification leads to destabilization of the protein, possibly through proteasomal degradation.

It is found in the cytoplasm. Its subcellular location is the cell membrane. The protein resides in the mitochondrion. It localises to the nucleus. It catalyses the reaction L-seryl-[protein] + ATP = O-phospho-L-seryl-[protein] + ADP + H(+). It carries out the reaction L-threonyl-[protein] + ATP = O-phospho-L-threonyl-[protein] + ADP + H(+). With respect to regulation, regulation is a highly complex process involving membrane recruitment, protein-protein interactions, dimerization, and phosphorylation/dephosphorylation events. Ras-GTP recruits RAF1 to the membrane, thereby promoting its activation. The inactive conformation of RAF1 is maintained by autoinhibitory interactions occurring between the N-terminal regulatory and the C-terminal catalytic domains and by the binding of a 14-3-3 protein that contacts two phosphorylation sites, Ser-259 and Ser-621. Upon mitogenic stimulation, Ras and PPP2R1A cooperate to release autoinhibition and the subsequent phosphorylation of activating sites: Ser-338, Tyr-341, Thr-491, and Ser-494, yields a fully active kinase. Through a negative feedback mechanism involving MAPK1/ERK2, RAF1 is phosphorylated on Ser-29, Ser-43, Ser-289, Ser-296, Ser-301 and Ser-642 by MAPK1/ERK2, which yields an inactive, desensitized kinase. The signaling-competent conformation of RAF1 is finally re-established by the coordinated action of PIN1, a prolyl isomerase that converts pSer and pThr residues from the cis to the trans conformation, which is preferentially recognized and dephosphorylated by PPP2R1A. Activated by homodimerization and heterodimerization (with BRAF). Also regulated through association with other proteins such as KSR2, CNKSR1/CNK1, PEBP1/RKIP, PHB/prohibitin and SPRY4. PEBP1/RKIP acts by dissociating RAF1 from its substrates MAP2K1/MEK1 and MAP2K2/MEK2. PHB/prohibitin facilitates the displacement of 14-3-3 from RAF1 by activated Ras, thereby promoting cell membrane localization and phosphorylation of RAF1 at the activating Ser-338. SPRY4 inhibits Ras-independent, but not Ras-dependent, activation of RAF1. CNKSR1/CNK1 regulates Src-mediated RAF1 activation. Its function is as follows. Serine/threonine-protein kinase that acts as a regulatory link between the membrane-associated Ras GTPases and the MAPK/ERK cascade, and this critical regulatory link functions as a switch determining cell fate decisions including proliferation, differentiation, apoptosis, survival and oncogenic transformation. RAF1 activation initiates a mitogen-activated protein kinase (MAPK) cascade that comprises a sequential phosphorylation of the dual-specific MAPK kinases (MAP2K1/MEK1 and MAP2K2/MEK2) and the extracellular signal-regulated kinases (MAPK3/ERK1 and MAPK1/ERK2). The phosphorylated form of RAF1 (on residues Ser-338 and Ser-339, by PAK1) phosphorylates BAD/Bcl2-antagonist of cell death at 'Ser-75'. Phosphorylates adenylyl cyclases: ADCY2, ADCY5 and ADCY6, resulting in their activation. Phosphorylates PPP1R12A resulting in inhibition of the phosphatase activity. Can promote NF-kB activation and inhibit signal transducers involved in motility (ROCK2), apoptosis (MAP3K5/ASK1 and STK3/MST2), proliferation and angiogenesis (RB1). Can protect cells from apoptosis also by translocating to the mitochondria where it binds BCL2 and displaces BAD/Bcl2-antagonist of cell death. Regulates Rho signaling and migration, and is required for normal wound healing. Plays a role in the oncogenic transformation of epithelial cells via repression of the TJ protein, occludin (OCLN) by inducing the up-regulation of a transcriptional repressor SNAI2/SLUG, which induces down-regulation of OCLN. Restricts caspase activation in response to selected stimuli, notably Fas stimulation, pathogen-mediated macrophage apoptosis, and erythroid differentiation. Phosphorylates TNNT2/cardiac muscle troponin T. This is RAF proto-oncogene serine/threonine-protein kinase (Raf1) from Rattus norvegicus (Rat).